Consider the following 98-residue polypeptide: MPVVYVNIFLAFIVSLMGLLVYRSHLMSSLLCLEGMMLSLFVMLTVTVLNNHFTLANMAPIILLVFAACEAALGLSLLVMVSNTYGTDYVQNLNLLQC.

The next 3 membrane-spanning stretches (helical) occupy residues 1–21 (MPVV…GLLV), 29–49 (SLLC…VTVL), and 61–81 (IILL…LVMV).

The protein belongs to the complex I subunit 4L family. In terms of assembly, core subunit of respiratory chain NADH dehydrogenase (Complex I) which is composed of 45 different subunits.

The protein resides in the mitochondrion inner membrane. It carries out the reaction a ubiquinone + NADH + 5 H(+)(in) = a ubiquinol + NAD(+) + 4 H(+)(out). Its function is as follows. Core subunit of the mitochondrial membrane respiratory chain NADH dehydrogenase (Complex I) which catalyzes electron transfer from NADH through the respiratory chain, using ubiquinone as an electron acceptor. Part of the enzyme membrane arm which is embedded in the lipid bilayer and involved in proton translocation. The polypeptide is NADH-ubiquinone oxidoreductase chain 4L (MT-ND4L) (Ursus arctos (Brown bear)).